A 136-amino-acid polypeptide reads, in one-letter code: Small ribosomal subunit protein bS16 (136 aa).

Positions L113–A122 are enriched in basic residues. The tract at residues L113–A136 is disordered.

Belongs to the bacterial ribosomal protein bS16 family.

In Pelodictyon phaeoclathratiforme (strain DSM 5477 / BU-1), this protein is Small ribosomal subunit protein bS16.